A 468-amino-acid polypeptide reads, in one-letter code: Hepatocyte nuclear factor 3-alpha (468 aa).

Positions Ala169–Leu260 form a DNA-binding region, fork-head. Residues Gly251 to Glu288 form an essential for DNA binding region. Residues Glu269–Phe396 form a disordered region. Residues Gly273 to Gly285 are compositionally biased toward gly residues. Phosphoserine occurs at positions 303 and 327. Low complexity-rich tracts occupy residues Gly318 to Pro328 and Ser347 to Ser365.

In terms of assembly, binds DNA as a monomer. Interacts with FOXA2. Interacts with NKX2-1. Interacts with HDAC7. Interacts with the histone H3-H4 heterodimer. Associates with nucleosomes containing histone H2A. Interacts with AR. Interacts with NR0B2. In terms of tissue distribution, restricted mainly to endoderm-derived tissues (lung, liver, stomach, and small intestine). Expressed in the prostate.

The protein resides in the nucleus. Transcription factor that is involved in embryonic development, establishment of tissue-specific gene expression and regulation of gene expression in differentiated tissues. Is thought to act as a 'pioneer' factor opening the compacted chromatin for other proteins through interactions with nucleosomal core histones and thereby replacing linker histones at target enhancer and/or promoter sites. Binds DNA with the consensus sequence 5'-[AC]A[AT]T[AG]TT[GT][AG][CT]T[CT]-3'. Proposed to play a role in translating the epigenetic signatures into cell type-specific enhancer-driven transcriptional programs. Involved in the development of multiple endoderm-derived organ systems such as the liver, pancreas, lungs and prostate; FOXA1 and FOXA2 seem to have at least in part redundant roles. Plays a role in prostate morphogenesis and epithelial cell differentiation. FOXA1 and FOXA2 are essential for hepatic specification. FOXA1 and FOXA2 are required for morphogenesis and cell differentiation during formation of the lung. FOXA1 and FOXA2 are involved in bile duct formation; they positively regulate the binding of glucocorticoid receptor/NR3C1 to the IL6 promoter. FOXA1 and FOXA2 regulate multiple phases of midbrain dopaminergic neuron development; they regulate expression of NEUROG2 at the beginning of mDA neurogenesis and of NR4A2 and EN1 in immature mDA neurons. Modulates the transcriptional activity of nuclear hormone receptors. Is involved in ESR1-mediated transcription. Inhibits NKX2-1-mediated transcription from the SFTPC promoter in lung epithel independently from DNA-binding. Involved in regulation of apoptosis. Involved in cell cycle regulation. Originally described as a transcription activator for a number of liver genes such as AFP, albumin, tyrosine aminotransferase, PEPCK, etc. Interacts with the cis-acting regulatory regions of these genes. Involved in glucose homeostasis; activates the GCG promoter. The chain is Hepatocyte nuclear factor 3-alpha (Foxa1) from Mus musculus (Mouse).